The sequence spans 452 residues: MGRRYFGTDGIRGKVGDAPITPDFVLRLGYAAGKVLASAPGRAASGARPTVLIGKDTRVSGYMLEAALEAGFSAAGVDVMLAGPMPTPGVAYLTRALRLSAGVVISASHNPYHDNGIKFFSADGNKLPDETEAEIEAWLDKSLDCAPSDGLGKARRLDDAAGRYIEFCKSTFPAAFDLRGMKLVVDCAHGAAYQVAPHVFHELGADVIPIGVAPNGFNINDGVGATAPDALMRAVRANHADLGIALDGDADRLLVVDHTGRLYNGDELLYVLVKDRIATNGQVEGAVGTLMTNLAVEVALKDAGVQFVRAAVGDRYVLEQLRERGWQLGAEGSGHILSLDRHSTGDGIVSALLVLAALKRSGKTLAQMLEGVTLFPQKLINVRMKPGADWKGSDAIRRAIGSAEQALAGSGRVLIRASGTEPVLRVMVEARHAADANHHAEAIADAVKQATA.

The active-site Phosphoserine intermediate is serine 108. Positions 108, 247, 249, and 251 each coordinate Mg(2+). At serine 108 the chain carries Phosphoserine.

This sequence belongs to the phosphohexose mutase family. It depends on Mg(2+) as a cofactor. Post-translationally, activated by phosphorylation.

It catalyses the reaction alpha-D-glucosamine 1-phosphate = D-glucosamine 6-phosphate. Catalyzes the conversion of glucosamine-6-phosphate to glucosamine-1-phosphate. In Burkholderia thailandensis (strain ATCC 700388 / DSM 13276 / CCUG 48851 / CIP 106301 / E264), this protein is Phosphoglucosamine mutase.